The chain runs to 688 residues: Translation initiation factor IF-2 (688 aa).

Composition is skewed to basic and acidic residues over residues 53 to 62 (GKEKSEKTKE) and 86 to 95 (KRDDKNEKVN). The tract at residues 53-100 (GKEKSEKTKEEDDEIETTAKNPIKESMNNKKSNKRDDKNEKVNTENAE) is disordered. Residues 187 to 354 (KRSPIITVMG…MILLSSEILE (168 aa)) form the tr-type G domain. The tract at residues 196 to 203 (GHVDHGKT) is G1. GTP is bound at residue 196 to 203 (GHVDHGKT). Positions 221–225 (GITQH) are G2. Residues 242-245 (DTPG) form a G3 region. Residues 242–246 (DTPGH) and 296–299 (NKID) contribute to the GTP site. The tract at residues 296–299 (NKID) is G4. The segment at 332–334 (SAH) is G5.

Belongs to the TRAFAC class translation factor GTPase superfamily. Classic translation factor GTPase family. IF-2 subfamily.

Its subcellular location is the cytoplasm. Functionally, one of the essential components for the initiation of protein synthesis. Protects formylmethionyl-tRNA from spontaneous hydrolysis and promotes its binding to the 30S ribosomal subunits. Also involved in the hydrolysis of GTP during the formation of the 70S ribosomal complex. This is Translation initiation factor IF-2 from Clostridium botulinum (strain Loch Maree / Type A3).